Reading from the N-terminus, the 467-residue chain is Flagellar hook-associated protein 2 (467 aa).

Residues Val411–Gln439 are a coiled coil.

This sequence belongs to the FliD family. Homopentamer.

The protein resides in the secreted. It is found in the bacterial flagellum. Required for the morphogenesis and for the elongation of the flagellar filament by facilitating polymerization of the flagellin monomers at the tip of growing filament. Forms a capping structure, which prevents flagellin subunits (transported through the central channel of the flagellum) from leaking out without polymerization at the distal end. The chain is Flagellar hook-associated protein 2 (fliD) from Salmonella typhimurium (strain LT2 / SGSC1412 / ATCC 700720).